Consider the following 68-residue polypeptide: Protein transport protein Sec61 subunit gamma (68 aa).

At M1–E32 the chain is on the cytoplasmic side. Residues F33–I61 form a helical membrane-spanning segment. The Extracellular segment spans residues N62–G68.

Belongs to the SecE/SEC61-gamma family. The SEC61 channel-forming translocon complex consists of channel-forming core components SEC61A1, SEC61B and SEC61G and different auxiliary components such as SEC62 and SEC63. The SEC61 channel associates with the multi-pass translocon (MPT) complex.

It is found in the endoplasmic reticulum membrane. Its function is as follows. Component of SEC61 channel-forming translocon complex that mediates transport of signal peptide-containing precursor polypeptides across the endoplasmic reticulum (ER). Forms a ribosome receptor and a gated pore in the ER membrane, both functions required for cotranslational translocation of nascent polypeptides. The SEC61 channel is also involved in ER membrane insertion of transmembrane proteins: it mediates membrane insertion of the first few transmembrane segments of proteins, while insertion of subsequent transmembrane regions of multi-pass membrane proteins is mediated by the multi-pass translocon (MPT) complex. In Gadus morhua (Atlantic cod), this protein is Protein transport protein Sec61 subunit gamma (sec61g).